Here is a 534-residue protein sequence, read N- to C-terminus: Glycerol kinase 5 (534 aa).

Positions 33 and 34 each coordinate ATP. Residues R103, D280, and Q281 each contribute to the glycerol site. Residues T302, G345, and G445 each contribute to the ATP site.

The protein belongs to the FGGY kinase family. In terms of tissue distribution, expressed predominantly in sebaceous glands.

The protein resides in the cytoplasm. The enzyme catalyses glycerol + ATP = sn-glycerol 3-phosphate + ADP + H(+). It participates in polyol metabolism; glycerol degradation via glycerol kinase pathway; sn-glycerol 3-phosphate from glycerol: step 1/1. In terms of biological role, skin-specific kinase that plays a key role in glycerol metabolism, catalyzing its phosphorylation to produce sn-glycerol 3-phosphate. Involved in skin-specific regulation of sterol regulatory element-binding protein (SREBP) processing and lipid biosynthesis. The polypeptide is Glycerol kinase 5 (Gk5) (Mus musculus (Mouse)).